The primary structure comprises 218 residues: Small ribosomal subunit protein uS3c (218 aa).

The KH type-2 domain maps to 43–118 (IKNYVQKNMR…KLNIAITRIA (76 aa)).

Belongs to the universal ribosomal protein uS3 family. Part of the 30S ribosomal subunit.

Its subcellular location is the plastid. It is found in the chloroplast. The sequence is that of Small ribosomal subunit protein uS3c (rps3) from Buxus microphylla (Littleleaf boxwood).